The chain runs to 579 residues: Altered inheritance of mitochondria protein 9, mitochondrial (579 aa).

A mitochondrion-targeting transit peptide spans 1 to 36; the sequence is MQSWNSQSFLSSHFTMLRYACKRAVPRLNAASGLRF.

Belongs to the AIM9 family.

The protein localises to the mitochondrion. The polypeptide is Altered inheritance of mitochondria protein 9, mitochondrial (AIM9) (Yarrowia lipolytica (strain CLIB 122 / E 150) (Yeast)).